A 67-amino-acid polypeptide reads, in one-letter code: Large ribosomal subunit protein bL32c (67 aa).

It belongs to the bacterial ribosomal protein bL32 family.

It is found in the plastid. The protein resides in the chloroplast. This Chara vulgaris (Common stonewort) protein is Large ribosomal subunit protein bL32c.